We begin with the raw amino-acid sequence, 641 residues long: Threonine--tRNA ligase (641 aa).

A TGS domain is found at 1–61 (MPVITLPDGS…ENDTELAIVT (61 aa)). The tract at residues 242-533 (DHRKIGKKLG…LIEEYEGAFP (292 aa)) is catalytic. Residues Cys-333, His-384, and His-510 each coordinate Zn(2+).

This sequence belongs to the class-II aminoacyl-tRNA synthetase family. In terms of assembly, homodimer. Zn(2+) is required as a cofactor.

The protein resides in the cytoplasm. The catalysed reaction is tRNA(Thr) + L-threonine + ATP = L-threonyl-tRNA(Thr) + AMP + diphosphate + H(+). Functionally, catalyzes the attachment of threonine to tRNA(Thr) in a two-step reaction: L-threonine is first activated by ATP to form Thr-AMP and then transferred to the acceptor end of tRNA(Thr). Also edits incorrectly charged L-seryl-tRNA(Thr). In Marinobacter nauticus (strain ATCC 700491 / DSM 11845 / VT8) (Marinobacter aquaeolei), this protein is Threonine--tRNA ligase.